We begin with the raw amino-acid sequence, 340 residues long: Entry-fusion complex protein OPG094 (340 aa).

G2 is lipidated: N-myristoyl glycine; by host. Over 2 to 319 (GGRVSVELPK…VQHNIKHSFD (318 aa)) the chain is Virion surface. The helical; Signal-anchor for type II membrane protein transmembrane segment at 320-340 (LKLHLISLLSLLVIWILIVAI) threads the bilayer.

The protein belongs to the orthopoxvirus OPG086 family. Interacts with OPG143. Component of the entry fusion complex (EFC) composed of OPG053, OPG076, OPG086, OPG094, OPG095, OPG099, OPG107, OPG143, OPG104, OPG147 and OPG155. Except for OPG095 and OPG053, each of the EFC proteins is required for assembly or stability of the complex. In terms of processing, unglycosylated because produced in viral factories instead of the classic ER -Golgi route.

The protein localises to the virion membrane. In terms of biological role, component of the entry fusion complex (EFC), which consists of 11 proteins. During cell infection, this complex mediates entry of the virion core into the host cytoplasm by a two-step mechanism consisting of lipid mixing of the viral and cellular membranes and subsequent pore formation. The polypeptide is Entry-fusion complex protein OPG094 (OPG094) (Homo sapiens (Human)).